The primary structure comprises 361 residues: U7 snRNA-associated Sm-like protein LSm11 (361 aa).

Residues 1–26 (MEEREWGARSARAGSPASPPSPRLDV) form a disordered region. Serine 15 and serine 21 each carry phosphoserine. Arginine 41 carries the post-translational modification Omega-N-methylarginine. The tract at residues 67–142 (RTGRGRARGT…QGPGRSKKAP (76 aa)) is disordered. Over residues 76–96 (TGEPASAGTSTGTSTGAGSSS) the composition is skewed to low complexity. Lysine 121 participates in a covalent cross-link: Glycyl lysine isopeptide (Lys-Gly) (interchain with G-Cter in SUMO2). The residue at position 155 (serine 155) is a Phosphoserine. The Sm domain maps to 155-230 (SPLGELHRCI…LTLTRLFDRL (76 aa)). The segment at 172–205 (VHIRTFKGLRGVCTGFLVAFDKFWNMALTDVDET) is SM 1. A disordered region spans residues 268–335 (RGDTDRSSHR…RKKKRKPKVD (68 aa)). Serine 281 is modified (phosphoserine). Positions 307-323 (GSSVGGTFSRATTLSRG) are enriched in polar residues. The SM 2 stretch occupies residues 344–357 (INQIFIRGENVLLV).

It belongs to the snRNP Sm proteins family. In terms of assembly, component of the heptameric ring U7 snRNP complex, or U7 Sm protein core complex, at least composed of LSM10, LSM11, SNRPB, SNRPD3, SNRPE, SNRPF, SNRPG and U7 snRNA. Formation of the U7 snRNP is an ATP-dependent process mediated by a specialized SMN complex containing at least the Sm protein core complex and additionally, the U7-specific LSM10 and LSM11 proteins. Identified in a histone pre-mRNA complex, at least composed of ERI1, LSM11, SLBP, SNRPB, SYNCRIP and YBX1. Interacts (via the Sm domains) with CLNS1A. Interacts with PRMT5, SMN, ZNF473 and WDR77. In terms of processing, not methylated.

The protein localises to the nucleus. Its function is as follows. Component of the U7 snRNP complex that is involved in the histone 3'-end pre-mRNA processing. Increases U7 snRNA levels but not histone 3'-end pre-mRNA processing activity, when overexpressed. Required for cell cycle progression from G1 to S phases. Binds specifically to the Sm-binding site of U7 snRNA. The protein is U7 snRNA-associated Sm-like protein LSm11 of Mus musculus (Mouse).